A 106-amino-acid polypeptide reads, in one-letter code: CDGSH iron-sulfur domain-containing protein 1 (106 aa).

S2 is modified (N-acetylserine). Residues 10–29 (EWIAAVTIAAGTAAIGYLAY) traverse the membrane as a helical; Signal-anchor for type III membrane protein segment. Residues 30–106 (KRFYVKDHRN…GPLIIKKKDT (77 aa)) lie on the Cytoplasmic side of the membrane. K40 participates in a covalent cross-link: Glycyl lysine isopeptide (Lys-Gly) (interchain with G-Cter in ubiquitin). K53 serves as the catalytic Schiff-base intermediate with pyridoxal 5'-phosphate. An N6-acetyllysine; alternate mark is found at K53 and K66. Glycyl lysine isopeptide (Lys-Gly) (interchain with G-Cter in ubiquitin); alternate cross-links involve residues K53 and K66. [2Fe-2S] cluster-binding residues include C70 and C72. Glycyl lysine isopeptide (Lys-Gly) (interchain with G-Cter in ubiquitin) cross-links involve residues K76 and K77. 2 residues coordinate [2Fe-2S] cluster: C81 and H85. Residues 84–106 (SHTKHNEETGDNVGPLIIKKKDT) form a disordered region. K87 is covalently cross-linked (Glycyl lysine isopeptide (Lys-Gly) (interchain with G-Cter in ubiquitin)). The residue at position 102 (K102) is an N6-acetyllysine; alternate. K102 participates in a covalent cross-link: Glycyl lysine isopeptide (Lys-Gly) (interchain with G-Cter in ubiquitin); alternate. Glycyl lysine isopeptide (Lys-Gly) (interchain with G-Cter in ubiquitin) cross-links involve residues K103 and K104.

The protein belongs to the CISD protein family. Homodimer. [2Fe-2S] cluster is required as a cofactor. The cofactor is pyridoxal 5'-phosphate. Ubiquitinated by PRKN during mitophagy, leading to its degradation and enhancement of mitophagy. Deubiquitinated by USP30.

The protein resides in the mitochondrion outer membrane. It catalyses the reaction L-cysteine + 2-oxoglutarate = 2-oxo-3-sulfanylpropanoate + L-glutamate. In terms of biological role, L-cysteine transaminase that catalyzes the reversible transfer of the amino group from L-cysteine to the alpha-keto acid 2-oxoglutarate to respectively form 2-oxo-3-sulfanylpropanoate and L-glutamate. The catalytic cycle occurs in the presence of pyridoxal 5'-phosphate (PLP) cofactor that facilitates transamination by initially forming an internal aldimine with the epsilon-amino group of active site Lys-55 residue on the enzyme (PLP-enzyme aldimine), subsequently displaced by formation of an external aldimine with the substrate amino group (PLP-L-cysteine aldimine). The external aldimine is further deprotonated to form a carbanion intermediate, which in the presence of 2-oxoglutarate regenerates PLP yielding final products 2-oxo-3-sulfanylpropanoate and L-glutamate. The proton transfer in carbanion intermediate is suggested to be controlled by the active site lysine residue, whereas PLP stabilizes carbanion structure through electron delocalization, also known as the electron sink effect. Plays a key role in regulating maximal capacity for electron transport and oxidative phosphorylation. May be involved in iron-sulfur cluster shuttling and/or in redox reactions. Can transfer the [2Fe-2S] cluster to an apo-acceptor protein only when in the oxidation state, likely serving as a redox sensor that regulates mitochondrial iron-sulfur cluster assembly and iron trafficking upon oxidative stress. The polypeptide is CDGSH iron-sulfur domain-containing protein 1 (CISD1) (Bos taurus (Bovine)).